Consider the following 207-residue polypeptide: Ribosomal RNA small subunit methyltransferase G (207 aa).

S-adenosyl-L-methionine is bound by residues G77, F82, E100–S102, and R141.

Belongs to the methyltransferase superfamily. RNA methyltransferase RsmG family.

It localises to the cytoplasm. Functionally, specifically methylates the N7 position of a guanine in 16S rRNA. The chain is Ribosomal RNA small subunit methyltransferase G from Borrelia turicatae (strain 91E135).